The chain runs to 339 residues: Deoxyguanosinetriphosphate triphosphohydrolase-like protein (339 aa).

Residues 75–186 (RLTHTLEVAQ…VQISDKIAYI (112 aa)) form the HD domain.

Belongs to the dGTPase family. Type 2 subfamily.

The polypeptide is Deoxyguanosinetriphosphate triphosphohydrolase-like protein (Caldanaerobacter subterraneus subsp. tengcongensis (strain DSM 15242 / JCM 11007 / NBRC 100824 / MB4) (Thermoanaerobacter tengcongensis)).